Consider the following 192-residue polypeptide: Thymidine kinase (192 aa).

ATP-binding positions include 9 to 16 (GAMNSGKT) and 85 to 88 (DEAQ). Catalysis depends on glutamate 86, which acts as the Proton acceptor. Zn(2+) contacts are provided by cysteine 143, cysteine 146, cysteine 180, and histidine 183.

This sequence belongs to the thymidine kinase family. In terms of assembly, homotetramer.

It localises to the cytoplasm. The catalysed reaction is thymidine + ATP = dTMP + ADP + H(+). This is Thymidine kinase from Lactiplantibacillus plantarum (strain ATCC BAA-793 / NCIMB 8826 / WCFS1) (Lactobacillus plantarum).